Here is a 482-residue protein sequence, read N- to C-terminus: Pentatricopeptide repeat-containing protein At1g74900, mitochondrial (482 aa).

11 PPR repeats span residues 90-124 (DASSFDLAIDIAARLHLHPTVWSLIHRMRSLRIGP), 125-159 (SPKTFAIVAERYASAGKPDKAVKLFLNMHEHGCFQ), 160-190 (DLASFNTILDVLCKSKRVEKAYELFRALRGR), 194-228 (DTVTYNVILNGWCLIKRTPKALEVLKEMVERGINP), 229-263 (NLTTYNTMLKGFFRAGQIRHAWEFFLEMKKRDCEI), 264-298 (DVVTYTTVVHGFGVAGEIKRARNVFDEMIREGVLP), 299-333 (SVATYNAMIQVLCKKDNVENAVVMFEEMVRRGYEP), 334-368 (NVTTYNVLIRGLFHAGEFSRGEELMQRMENEGCEP), 369-403 (NFQTYNMMIRYYSECSEVEKALGLFEKMGSGDCLP), 404-441 (NLDTYNILISGMFVRKRSEDMVVAGKLLLEMVERGFIP), and 442-476 (RKFTFNRVLNGLLLTGNQAFAKEILRLQSKSGSRL).

It belongs to the PPR family. P subfamily.

The protein localises to the mitochondrion. Functionally, required for the trans-splicing of intron 1 of the mitochondrial nad1 transcript encoding the ND1 subunit of the mitochondrial membrane respiratory chain NADH dehydrogenase (Complex I). This is Pentatricopeptide repeat-containing protein At1g74900, mitochondrial (OTP43) from Arabidopsis thaliana (Mouse-ear cress).